The chain runs to 159 residues: Urease accessory protein UreE (159 aa).

Belongs to the UreE family.

It localises to the cytoplasm. In terms of biological role, involved in urease metallocenter assembly. Binds nickel. Probably functions as a nickel donor during metallocenter assembly. The sequence is that of Urease accessory protein UreE from Acinetobacter baylyi (strain ATCC 33305 / BD413 / ADP1).